The sequence spans 676 residues: DNA ligase (676 aa).

Residues 41 to 45 (DLTYD), 90 to 91 (SL), and Glu123 each bind NAD(+). Lys125 (N6-AMP-lysine intermediate) is an active-site residue. Positions 146, 180, 293, and 317 each coordinate NAD(+). 4 residues coordinate Zn(2+): Cys408, Cys411, Cys424, and Cys429.

The protein belongs to the NAD-dependent DNA ligase family. LigA subfamily. Mg(2+) is required as a cofactor. The cofactor is Mn(2+).

It catalyses the reaction NAD(+) + (deoxyribonucleotide)n-3'-hydroxyl + 5'-phospho-(deoxyribonucleotide)m = (deoxyribonucleotide)n+m + AMP + beta-nicotinamide D-nucleotide.. DNA ligase that catalyzes the formation of phosphodiester linkages between 5'-phosphoryl and 3'-hydroxyl groups in double-stranded DNA using NAD as a coenzyme and as the energy source for the reaction. It is essential for DNA replication and repair of damaged DNA. The sequence is that of DNA ligase from Borrelia turicatae (strain 91E135).